We begin with the raw amino-acid sequence, 189 residues long: UPF0301 protein RrIowa_0061 (189 aa).

This sequence belongs to the UPF0301 (AlgH) family.

This chain is UPF0301 protein RrIowa_0061, found in Rickettsia rickettsii (strain Iowa).